Reading from the N-terminus, the 20-residue chain is Chrysophsin-3 (20 aa).

Histidine 20 is modified (histidine amide).

Gill.

It localises to the secreted. Its function is as follows. Has antibacterial activity against Gram-positive bacteria B.subtilis ATCC 6633, L.garvieae ATCC 49156 and S.iniae F-8502, and Gram-negative bacteria E.coli WT-2, V.anguillarum ATCC 19264, V.penaeicida KHA, V.harveyi ATCC 14126, V.vulnificus ATCC 33148, A.salmonicida NCMB 1102 and P.putida ATCC 12633. Has hemolytic activity against human red blood cells. Seems to disrupt the membranes by adopting an alpha helical conformation. May play a significant role in innate host defense. The protein is Chrysophsin-3 of Pagrus major (Red sea bream).